Reading from the N-terminus, the 373-residue chain is Anhydro-N-acetylmuramic acid kinase (373 aa).

Residue 12–19 coordinates ATP; it reads GTSLDGVD.

This sequence belongs to the anhydro-N-acetylmuramic acid kinase family.

The catalysed reaction is 1,6-anhydro-N-acetyl-beta-muramate + ATP + H2O = N-acetyl-D-muramate 6-phosphate + ADP + H(+). It functions in the pathway amino-sugar metabolism; 1,6-anhydro-N-acetylmuramate degradation. Its pathway is cell wall biogenesis; peptidoglycan recycling. In terms of biological role, catalyzes the specific phosphorylation of 1,6-anhydro-N-acetylmuramic acid (anhMurNAc) with the simultaneous cleavage of the 1,6-anhydro ring, generating MurNAc-6-P. Is required for the utilization of anhMurNAc either imported from the medium or derived from its own cell wall murein, and thus plays a role in cell wall recycling. This is Anhydro-N-acetylmuramic acid kinase from Serratia proteamaculans (strain 568).